The sequence spans 755 residues: Subtilisin-like protease 4 (755 aa).

An N-terminal signal peptide occupies residues 1-20 (MDYFLFIALTFLLTFHVHNA). One can recognise an Inhibitor I9 domain in the interval 41–119 (YIIHVTGPEG…ISAHPQRVLH (79 aa)). The region spanning 128–611 (FLGLQQDTGV…SGHVNPSRAN (484 aa)) is the Peptidase S8 domain. Residue Asp-153 is the Charge relay system of the active site. The N-linked (GlcNAc...) asparagine glycan is linked to Asn-182. Catalysis depends on His-217, which acts as the Charge relay system. 5 N-linked (GlcNAc...) asparagine glycosylation sites follow: Asn-297, Asn-325, Asn-393, Asn-468, and Asn-529. The PA domain occupies 376–461 (PLAYAGKNGK…ATHVSYAAGI (86 aa)). The active-site Charge relay system is the Ser-544. Asn-706 and Asn-727 each carry an N-linked (GlcNAc...) asparagine glycan.

It belongs to the peptidase S8 family.

The protein localises to the secreted. The protein resides in the extracellular space. It localises to the apoplast. Functionally, required for arbuscular mycorrhiza (AM) development during AM symbiosis with AM fungi (e.g. Glomeromycota intraradices). The protein is Subtilisin-like protease 4 of Lotus japonicus (Lotus corniculatus var. japonicus).